A 428-amino-acid chain; its full sequence is Serine--tRNA ligase (428 aa).

236 to 238 (TAE) contacts L-serine. 267 to 269 (RSE) lines the ATP pocket. L-serine is bound at residue glutamate 290. 354–357 (EISS) contacts ATP. Position 388 (serine 388) interacts with L-serine.

Belongs to the class-II aminoacyl-tRNA synthetase family. Type-1 seryl-tRNA synthetase subfamily. Homodimer. The tRNA molecule binds across the dimer.

Its subcellular location is the cytoplasm. The enzyme catalyses tRNA(Ser) + L-serine + ATP = L-seryl-tRNA(Ser) + AMP + diphosphate + H(+). It catalyses the reaction tRNA(Sec) + L-serine + ATP = L-seryl-tRNA(Sec) + AMP + diphosphate + H(+). It participates in aminoacyl-tRNA biosynthesis; selenocysteinyl-tRNA(Sec) biosynthesis; L-seryl-tRNA(Sec) from L-serine and tRNA(Sec): step 1/1. In terms of biological role, catalyzes the attachment of serine to tRNA(Ser). Is also able to aminoacylate tRNA(Sec) with serine, to form the misacylated tRNA L-seryl-tRNA(Sec), which will be further converted into selenocysteinyl-tRNA(Sec). This Psychrobacter sp. (strain PRwf-1) protein is Serine--tRNA ligase.